The sequence spans 383 residues: MVLKVISANQAVAEAAKLAKPKVIPVYPITPQTSISEYLAKFVADGELKAEYIRVESEHSAMSACVGASGAGVRVFTATSSQGLALMHEIVYAAAGLRNPIVMANANRALSAPLSIWNDQQDSIAERDSGWMQIYVESGQEALDSVLLSYRVSEDRDVLLPSMVCLDGFILTHTVEPVDIPSQEDVDSFLPEFQPQVMLDPDEPMSLGTFTDPDYYMEARYEVEKAMERSRKIIERACREFSEMFGREYGLVEEYRCEDAEIILVAMGSVCSTLREVIDELRDKGKAVGLLKVRVHRPFPAEEIKSAVRNASKVAVLDKNITFSVGGALYTEISALLRDREVYGFIVGLGGRDITPAHIEEIVRRTENPERSVTWIGLKEESE.

In terms of assembly, heterotetramer of one alpha, one beta, one delta and one gamma chain.

It carries out the reaction 2 oxidized [2Fe-2S]-[ferredoxin] + pyruvate + CoA = 2 reduced [2Fe-2S]-[ferredoxin] + acetyl-CoA + CO2 + H(+). The protein is Pyruvate synthase subunit PorA (porA) of Methanothermobacter thermautotrophicus (strain ATCC 29096 / DSM 1053 / JCM 10044 / NBRC 100330 / Delta H) (Methanobacterium thermoautotrophicum).